A 505-amino-acid polypeptide reads, in one-letter code: Maturase K (505 aa).

The protein belongs to the intron maturase 2 family. MatK subfamily.

The protein localises to the plastid. It localises to the chloroplast. Functionally, usually encoded in the trnK tRNA gene intron. Probably assists in splicing its own and other chloroplast group II introns. This chain is Maturase K, found in Cubanola domingensis.